Here is a 456-residue protein sequence, read N- to C-terminus: Neurexin-3-beta (456 aa).

Positions 1–35 (MHLRIHARRNPPRRPAWTLGIWSLFWGCIVSSVWS) are cleaved as a signal peptide. The Extracellular segment spans residues 36–381 (SSNVASSSSS…EVIRESSSTT (346 aa)). A disordered region spans residues 41 to 63 (SSSSSPGSHSQHEHHFHGSKHHS). Basic residues predominate over residues 52–63 (HEHHFHGSKHHS). One can recognise a Laminin G-like domain in the interval 82–282 (ATYIFGKSGG…NPNIKINGSV (201 aa)). Ca(2+) is bound by residues Asp-134 and Ile-151. The N-linked (GlcNAc...) asparagine glycan is linked to Asn-181. Residues Ile-233 and Asn-235 each coordinate Ca(2+). Residues Asn-279 and Asn-323 are each glycosylated (N-linked (GlcNAc...) asparagine). A disordered region spans residues 316–340 (ATTTTRKNRSTASIQPTSDDLVSSA). Polar residues predominate over residues 325–340 (STASIQPTSDDLVSSA). Ser-339 carries an O-linked (Xyl...) (heparan sulfate) serine glycan. A helical membrane pass occupies residues 382–402 (GMVVGIVAAAALCILILLYAM). The Cytoplasmic segment spans residues 403 to 456 (YKYRNRDEGSYQVDETRNYISNSAQSNGTLLKEKPPSSKGGHKKQKNKDKEYYV). Residues 424–456 (NSAQSNGTLLKEKPPSSKGGHKKQKNKDKEYYV) form a disordered region.

It belongs to the neurexin family. Weakly interacts with CBLN1 and CBLN2. Very weak binding, if any, to CBLN4. Specific isoforms bind neuroligins NLGN1, NLGN2 and NLGN3. Interacts with CLSTN3. Processed by alpha-secretase leading to the formation of an extracellular soluble protein as well as a C-terminal membrane-embedded fragment (CTF). Proteolysis of these CTFs by gamma-secretase releases intracellular domains (ICDs) and extracellular peptides. In terms of processing, O-glycosylated; contains heparan sulfate. Heparan sulfate attachment is required for synapse development by mediating interactions with neuroligins.

It localises to the presynaptic cell membrane. The protein resides in the secreted. Functionally, neuronal cell surface protein that may be involved in cell recognition and cell adhesion. May mediate intracellular signaling. Functions as part of a trans-synaptic complex by binding to cerebellins and postsynaptic GRID1. This interaction helps regulate the activity of NMDA and AMPA receptors at hippocampal synapses without affecting synapse formation. NRXN3B-CBLN2-GRID1 complex transduce presynaptic signals into postsynaptic AMPAR response. In Bos taurus (Bovine), this protein is Neurexin-3-beta (NRXN3).